Reading from the N-terminus, the 319-residue chain is 4-hydroxy-3-methylbut-2-enyl diphosphate reductase (319 aa).

C12 is a [4Fe-4S] cluster binding site. H41 and H74 together coordinate (2E)-4-hydroxy-3-methylbut-2-enyl diphosphate. Dimethylallyl diphosphate-binding residues include H41 and H74. H41 and H74 together coordinate isopentenyl diphosphate. C96 serves as a coordination point for [4Fe-4S] cluster. Position 124 (H124) interacts with (2E)-4-hydroxy-3-methylbut-2-enyl diphosphate. Position 124 (H124) interacts with dimethylallyl diphosphate. Residue H124 coordinates isopentenyl diphosphate. E126 (proton donor) is an active-site residue. T167 is a binding site for (2E)-4-hydroxy-3-methylbut-2-enyl diphosphate. Position 197 (C197) interacts with [4Fe-4S] cluster. 4 residues coordinate (2E)-4-hydroxy-3-methylbut-2-enyl diphosphate: S225, S226, N227, and S269. 4 residues coordinate dimethylallyl diphosphate: S225, S226, N227, and S269. 4 residues coordinate isopentenyl diphosphate: S225, S226, N227, and S269.

It belongs to the IspH family. Homodimer. [4Fe-4S] cluster is required as a cofactor.

It catalyses the reaction isopentenyl diphosphate + 2 oxidized [2Fe-2S]-[ferredoxin] + H2O = (2E)-4-hydroxy-3-methylbut-2-enyl diphosphate + 2 reduced [2Fe-2S]-[ferredoxin] + 2 H(+). The enzyme catalyses dimethylallyl diphosphate + 2 oxidized [2Fe-2S]-[ferredoxin] + H2O = (2E)-4-hydroxy-3-methylbut-2-enyl diphosphate + 2 reduced [2Fe-2S]-[ferredoxin] + 2 H(+). Its pathway is isoprenoid biosynthesis; dimethylallyl diphosphate biosynthesis; dimethylallyl diphosphate from (2E)-4-hydroxy-3-methylbutenyl diphosphate: step 1/1. It functions in the pathway isoprenoid biosynthesis; isopentenyl diphosphate biosynthesis via DXP pathway; isopentenyl diphosphate from 1-deoxy-D-xylulose 5-phosphate: step 6/6. Its function is as follows. Catalyzes the conversion of 1-hydroxy-2-methyl-2-(E)-butenyl 4-diphosphate (HMBPP) into a mixture of isopentenyl diphosphate (IPP) and dimethylallyl diphosphate (DMAPP). Acts in the terminal step of the DOXP/MEP pathway for isoprenoid precursor biosynthesis. This is 4-hydroxy-3-methylbut-2-enyl diphosphate reductase from Buchnera aphidicola subsp. Acyrthosiphon pisum (strain Tuc7).